A 427-amino-acid chain; its full sequence is UPF0597 protein CPR_0790 (427 aa).

It belongs to the UPF0597 family.

This is UPF0597 protein CPR_0790 from Clostridium perfringens (strain SM101 / Type A).